A 297-amino-acid chain; its full sequence is Glycerol-3-phosphate dehydrogenase [NAD(P)+] (297 aa).

Positions 11, 33, and 79 each coordinate NADPH. Residues K79, G107, and S109 each coordinate sn-glycerol 3-phosphate. Residue A111 coordinates NADPH. The sn-glycerol 3-phosphate site is built by K161, D214, S224, R225, and N226. K161 functions as the Proton acceptor in the catalytic mechanism. Residue R225 coordinates NADPH. The NADPH site is built by V249 and E251.

The protein belongs to the NAD-dependent glycerol-3-phosphate dehydrogenase family.

The protein resides in the cytoplasm. It catalyses the reaction sn-glycerol 3-phosphate + NAD(+) = dihydroxyacetone phosphate + NADH + H(+). It carries out the reaction sn-glycerol 3-phosphate + NADP(+) = dihydroxyacetone phosphate + NADPH + H(+). It participates in membrane lipid metabolism; glycerophospholipid metabolism. Catalyzes the reduction of the glycolytic intermediate dihydroxyacetone phosphate (DHAP) to sn-glycerol 3-phosphate (G3P), the key precursor for phospholipid synthesis. This is Glycerol-3-phosphate dehydrogenase [NAD(P)+] from Campylobacter jejuni subsp. doylei (strain ATCC BAA-1458 / RM4099 / 269.97).